Consider the following 631-residue polypeptide: Probable potassium transport system protein Kup 1 (631 aa).

The next 12 membrane-spanning stretches (helical) occupy residues 16 to 36, 58 to 78, 109 to 129, 145 to 165, 173 to 193, 219 to 239, 255 to 275, 288 to 308, 345 to 365, 370 to 390, 402 to 422, and 427 to 447; these read LGLS…SPLY, VLSL…LVFV, VLVF…TLTP, PLFH…LFLI, VGAL…LLGI, GWSG…GEAL, WFCC…ALLL, LAPP…TIIA, IYIP…VAGF, GLAA…ALLV, PLAV…FFGA, and VGAG…VMIT.

The protein belongs to the HAK/KUP transporter (TC 2.A.72) family.

It localises to the cell inner membrane. It catalyses the reaction K(+)(in) + H(+)(in) = K(+)(out) + H(+)(out). In terms of biological role, transport of potassium into the cell. Likely operates as a K(+):H(+) symporter. This chain is Probable potassium transport system protein Kup 1, found in Geobacter sulfurreducens (strain ATCC 51573 / DSM 12127 / PCA).